The primary structure comprises 253 residues: tRNA uridine(34) hydroxylase (253 aa).

The Rhodanese domain maps to His127–Tyr221. The active-site Cysteine persulfide intermediate is Cys181.

Belongs to the TrhO family.

It catalyses the reaction uridine(34) in tRNA + AH2 + O2 = 5-hydroxyuridine(34) in tRNA + A + H2O. Its function is as follows. Catalyzes oxygen-dependent 5-hydroxyuridine (ho5U) modification at position 34 in tRNAs. This Xanthomonas campestris pv. campestris (strain B100) protein is tRNA uridine(34) hydroxylase.